The following is an 857-amino-acid chain: DNA mismatch repair protein MutS (857 aa).

An ATP-binding site is contributed by 608 to 615 (GPNMSGKS).

This sequence belongs to the DNA mismatch repair MutS family.

Its function is as follows. This protein is involved in the repair of mismatches in DNA. It is possible that it carries out the mismatch recognition step. This protein has a weak ATPase activity. This Lactobacillus johnsonii (strain CNCM I-12250 / La1 / NCC 533) protein is DNA mismatch repair protein MutS.